We begin with the raw amino-acid sequence, 558 residues long: Receptor-like kinase LIP2 (558 aa).

The disordered stretch occupies residues 1 to 45 (MHCFPCFSSPKNKKSSTTNETNDNNEPKPDDRRRAEETEEIEQSE). Residues 15–24 (SSTTNETNDN) are compositionally biased toward low complexity. A compositionally biased stretch (basic and acidic residues) spans 25-36 (NEPKPDDRRRAE). Thr-53 carries the phosphothreonine modification. Residues 64-343 (FRQECLLGEG…SDVMVALSFL (280 aa)) form the Protein kinase domain. ATP-binding positions include 70–78 (LGEGGFGRV) and Lys-93. The residue at position 138 (Tyr-138) is a Phosphotyrosine. The active-site Proton acceptor is the Asp-191. Ser-195 and Ser-227 each carry phosphoserine. Phosphothreonine is present on Thr-233. The residue at position 241 (Tyr-241) is a Phosphotyrosine. Positions 372 to 558 (HDSNLVSPPP…SDVAIDSIKE (187 aa)) are disordered. A compositionally biased stretch (basic and acidic residues) spans 401–418 (ESEKESVSKNEYKKKHEE). Positions 419–431 (EDSSMESDDESDS) are enriched in acidic residues. Basic and acidic residues predominate over residues 432-448 (NSEHEKDQPPKPIDEKN). Residues 473–486 (SKSSQKSNDESTSS) show a composition bias toward low complexity. Basic and acidic residues-rich tracts occupy residues 488–500 (YDSD…KGKE), 508–524 (EEKH…KTDD), and 547–558 (IKSDVAIDSIKE).

Belongs to the protein kinase superfamily. Ser/Thr protein kinase family. As to quaternary structure, interacts with PRK6. Palmitoylated. In terms of tissue distribution, expressed in mature pollen and in germinating pollen tubes.

The protein localises to the cell membrane. Its function is as follows. Involved in pollen tube guidance into micropyle. Participates in perception of the ovule-secreted peptide signal LURE1. The chain is Receptor-like kinase LIP2 from Arabidopsis thaliana (Mouse-ear cress).